Here is a 1031-residue protein sequence, read N- to C-terminus: Toll-like receptor 9 (1031 aa).

The first 25 residues, 1–25 (MGPCHGALHPLSLLVQAAALAVALA), serve as a signal peptide directing secretion. At 26 to 817 (QGTLPAFLPC…LCLDEALSWD (792 aa)) the chain is on the extracellular side. Cysteines 35 and 45 form a disulfide. Residue 47–51 (WLFLK) coordinates DNA. LRR repeat units lie at residues 62–85 (RGNV…DFVH), 87–110 (SSLR…HFPC), 122–147 (VPTL…SLVS), 150–166 (LSRT…LAGL), 167–190 (HSLR…ALQV), 198–221 (LGNL…LPPS), 223–242 (EYLL…DLAN), 243–268 (LTAL…CMEC), 283–306 (LNHL…WFHA), 308–332 (GNLM…AFQG), 333–356 (LAQL…HLHL), 363–386 (LLSL…TLRS), 390–413 (LPML…IFGA), 415–440 (PGLR…TGEV), 470–494 (CKTL…MFAR), 496–519 (SRLQ…QFMP), 520–543 (LTSL…SFTE), 545–572 (PRLE…SFVA), 574–598 (LPAL…LCSA), 600–622 (LRAL…LYLH), 627–650 (LRSL…TLDN), 652–675 (PKSL…SLVL), 676–699 (LPRL…SLPN), 701–723 (TQLQ…FFAL), 724–747 (ATRL…WFGS), and 749–772 (AGTL…AFVD). N64 carries N-linked (GlcNAc...) asparagine glycosylation. DNA contacts are provided by residues 72–77 (SNRIHH) and 95–109 (KWNC…MHFP). A disulfide bond links C98 and C110. A glycan (N-linked (GlcNAc...) asparagine) is linked at N129. Residues Y132, R152, and 179–181 (YYK) each bind DNA. C178 and C184 are joined by a disulfide. N200 carries an N-linked (GlcNAc...) asparagine glycan. Y208 provides a ligand contact to DNA. Residues N210 and N242 are each glycosylated (N-linked (GlcNAc...) asparagine). 2 cysteine pairs are disulfide-bonded: C255/C268 and C258/C265. Residue C258 is the site of S-palmitoyl cysteine attachment. R262 contacts DNA. A lipid anchor (S-palmitoyl cysteine) is attached at C265. N-linked (GlcNAc...) asparagine glycosylation occurs at N340. C470 and C500 are disulfide-bonded. N474 and N513 each carry an N-linked (GlcNAc...) asparagine glycan. A glycan (N-linked (GlcNAc...) asparagine) is linked at N567. N-linked (GlcNAc...) asparagine glycosylation is found at N669, N694, and N699. An N-linked (GlcNAc...) asparagine glycan is attached at N731. Cystine bridges form between C764–C790 and C766–C809. Residues 818–838 (CFGLSLLTVALGLAVPMLHHL) form a helical membrane-spanning segment. At 839 to 1031 (CGWDLWYCFH…NFCRGPTTAE (193 aa)) the chain is on the cytoplasmic side. Residues 866-1011 (LPYDAFVVFD…SFWAQLGTAL (146 aa)) form the TIR domain.

Belongs to the Toll-like receptor family. Monomer and homodimer. Exists as a monomer in the absence of unmethylated cytidine-phosphate-guanosine (CpG) ligand. Proteolytic processing of an insertion loop (Z-loop) is required for homodimerization upon binding to the unmethylated CpG ligand leading to its activation. Interacts with MYD88 via their respective TIR domains. Interacts with BTK. Interacts (via transmembrane domain) with UNC93B1. Interacts with CD300LH; the interaction may promote full activation of TLR9-triggered innate responses. Interacts with CNPY3 and HSP90B1; this interaction is required for proper folding in the endoplasmic reticulum. Interacts with SMPDL3B. Interacts with CD82; this interaction is essential for TLR9-dependent myddosome formation in response to CpG stimulation. Activated by proteolytic cleavage of the flexible loop between repeats LRR14 and LRR15 within the ectodomain. Cleavage requires UNC93B1. Proteolytically processed by first removing the majority of the ectodomain by either asparagine endopeptidase (AEP) or a cathepsin followed by a trimming event that is solely cathepsin mediated and required for optimal receptor signaling. In terms of processing, palmitoylated by ZDHHC3 in the Golgi regulates TLR9 trafficking from the Golgi to endosomes. Depalmitoylation by PPT1 controls the release of TLR9 from UNC93B1 in endosomes.

It localises to the endoplasmic reticulum membrane. The protein localises to the endosome. It is found in the lysosome. The protein resides in the cytoplasmic vesicle. Its subcellular location is the phagosome. Functionally, key component of innate and adaptive immunity. TLRs (Toll-like receptors) control host immune response against pathogens through recognition of molecular patterns specific to microorganisms. TLR9 is a nucleotide-sensing TLR which is activated by unmethylated cytidine-phosphate-guanosine (CpG) dinucleotides. Acts via MYD88 and TRAF6, leading to NF-kappa-B activation, cytokine secretion and the inflammatory response. Upon CpG stimulation, induces B-cell proliferation, activation, survival and antibody production. This Felis catus (Cat) protein is Toll-like receptor 9 (TLR9).